The sequence spans 213 residues: ATP synthase peripheral stalk subunit OSCP, mitochondrial (213 aa).

Residues 1–23 (MATPAVSGLSRQVRCFSTSVVRP) constitute a mitochondrion transit peptide. The SIFI-degron motif lies at 5-23 (AVSGLSRQVRCFSTSVVRP). 4 positions are modified to N6-acetyllysine: K54, K60, K70, and K73. K90 is subject to N6-succinyllysine. N6-acetyllysine; alternate occurs at positions 158 and 162. N6-succinyllysine; alternate occurs at positions 158 and 162. N6-acetyllysine is present on residues K172, K176, and K192. Position 199 is an N6-succinyllysine (K199).

This sequence belongs to the ATPase delta chain family. In terms of assembly, component of the ATP synthase complex composed at least of ATP5F1A/subunit alpha, ATP5F1B/subunit beta, ATP5MC1/subunit c (homooctomer), MT-ATP6/subunit a, MT-ATP8/subunit 8, ATP5ME/subunit e, ATP5MF/subunit f, ATP5MG/subunit g, ATP5MK/subunit k, ATP5MJ/subunit j, ATP5F1C/subunit gamma, ATP5F1D/subunit delta, ATP5F1E/subunit epsilon, ATP5PF/subunit F6, ATP5PB/subunit b, ATP5PD/subunit d, ATP5PO/subunit OSCP. ATP synthase complex consists of a soluble F(1) head domain (subunits alpha(3) and beta(3)) - the catalytic core - and a membrane F(0) domain - the membrane proton channel (subunits c, a, 8, e, f, g, k and j). These two domains are linked by a central stalk (subunits gamma, delta, and epsilon) rotating inside the F1 region and a stationary peripheral stalk (subunits F6, b, d, and OSCP). Acetylation at Lys-162 decreases ATP production. Deacetylated by SIRT3. In terms of processing, in response to mitochondrial stress, the precursor protein is ubiquitinated by the SIFI complex in the cytoplasm before mitochondrial import, leading to its degradation. Within the SIFI complex, UBR4 initiates ubiquitin chain that are further elongated or branched by KCMF1.

It is found in the mitochondrion. Its subcellular location is the mitochondrion inner membrane. Subunit OSCP, of the mitochondrial membrane ATP synthase complex (F(1)F(0) ATP synthase or Complex V) that produces ATP from ADP in the presence of a proton gradient across the membrane which is generated by electron transport complexes of the respiratory chain. ATP synthase complex consist of a soluble F(1) head domain - the catalytic core - and a membrane F(1) domain - the membrane proton channel. These two domains are linked by a central stalk rotating inside the F(1) region and a stationary peripheral stalk. During catalysis, ATP synthesis in the catalytic domain of F(1) is coupled via a rotary mechanism of the central stalk subunits to proton translocation. In vivo, can only synthesize ATP although its ATP hydrolase activity can be activated artificially in vitro. Part of the complex F(0) domain. Part of the complex F(0) domain and the peripheric stalk, which acts as a stator to hold the catalytic alpha(3)beta(3) subcomplex and subunit a/ATP6 static relative to the rotary elements. The protein is ATP synthase peripheral stalk subunit OSCP, mitochondrial of Pongo abelii (Sumatran orangutan).